We begin with the raw amino-acid sequence, 165 residues long: E3 ubiquitin ligase complex SCF subunit sconC (165 aa).

Positions 106–165 (ILAANYLDIKALLDVGCKTVANMIKGKSPEEIRKTFNIQNDFTPEEEDQIRRENEWAEDR) are interaction with the F-box domain of F-box proteins.

It belongs to the SKP1 family. As to quaternary structure, component of the SCF (SKP1-CUL1-F-box protein) E3 ubiquitin ligase complexes.

It functions in the pathway protein modification; protein ubiquitination. Its function is as follows. Essential component of the SCF (SKP1-CUL1-F-box protein) E3 ubiquitin ligase complexes, which mediate the ubiquitination and subsequent proteasomal degradation of target proteins. Controls sulfur metabolite repression, probably by mediating the inactivation or degradation of the metR transcription factor. The protein is E3 ubiquitin ligase complex SCF subunit sconC (sconC) of Arthroderma otae (Microsporum canis).